The sequence spans 144 residues: Large ribosomal subunit protein uL14 (144 aa).

This sequence belongs to the universal ribosomal protein uL14 family. As to quaternary structure, part of the 50S ribosomal subunit. Forms a cluster with proteins L3 and L24e, part of which may contact the 16S rRNA in 2 intersubunit bridges.

Its function is as follows. Binds to 23S rRNA. Forms part of two intersubunit bridges in the 70S ribosome. The protein is Large ribosomal subunit protein uL14 of Pyrobaculum islandicum (strain DSM 4184 / JCM 9189 / GEO3).